Consider the following 313-residue polypeptide: Methionyl-tRNA formyltransferase (313 aa).

Residue 109 to 112 (SLLP) coordinates (6S)-5,6,7,8-tetrahydrofolate.

The protein belongs to the Fmt family.

It carries out the reaction L-methionyl-tRNA(fMet) + (6R)-10-formyltetrahydrofolate = N-formyl-L-methionyl-tRNA(fMet) + (6S)-5,6,7,8-tetrahydrofolate + H(+). Functionally, attaches a formyl group to the free amino group of methionyl-tRNA(fMet). The formyl group appears to play a dual role in the initiator identity of N-formylmethionyl-tRNA by promoting its recognition by IF2 and preventing the misappropriation of this tRNA by the elongation apparatus. The protein is Methionyl-tRNA formyltransferase of Pelotomaculum thermopropionicum (strain DSM 13744 / JCM 10971 / SI).